The following is a 396-amino-acid chain: Chorismate synthase (396 aa).

2 residues coordinate NADP(+): Arg40 and Arg46. FMN-binding positions include Arg134 to Ser136, Gln257 to Ala258, Gly302, Lys317 to Ser321, and Arg343.

Belongs to the chorismate synthase family. As to quaternary structure, homotetramer. The cofactor is FMNH2.

It carries out the reaction 5-O-(1-carboxyvinyl)-3-phosphoshikimate = chorismate + phosphate. It functions in the pathway metabolic intermediate biosynthesis; chorismate biosynthesis; chorismate from D-erythrose 4-phosphate and phosphoenolpyruvate: step 7/7. Functionally, catalyzes the anti-1,4-elimination of the C-3 phosphate and the C-6 proR hydrogen from 5-enolpyruvylshikimate-3-phosphate (EPSP) to yield chorismate, which is the branch point compound that serves as the starting substrate for the three terminal pathways of aromatic amino acid biosynthesis. This reaction introduces a second double bond into the aromatic ring system. This is Chorismate synthase from Bifidobacterium animalis subsp. lactis (strain AD011).